Here is a 382-residue protein sequence, read N- to C-terminus: RNA binding protein fox-1 homolog 1 (382 aa).

Residues Met-1–Val-121 form a disordered region. Residues Gln-70–Gly-87 show a composition bias toward polar residues. Positions Thr-88–Asp-99 are enriched in low complexity. The segment covering Gly-100–Lys-113 has biased composition (polar residues). Residues Lys-117–Ala-193 enclose the RRM domain. Residue Arg-317 is modified to Asymmetric dimethylarginine. The interval Met-357–Ser-382 is disordered.

In terms of assembly, binds to the C-terminus of ATXN2.

The protein localises to the nucleus. The protein resides in the cytoplasm. Its function is as follows. RNA-binding protein that regulates alternative splicing events by binding to 5'-UGCAUGU-3' elements. Prevents binding of U2AF2 to the 3'-splice site. Regulates alternative splicing of tissue-specific exons and of differentially spliced exons during erythropoiesis. This Pongo abelii (Sumatran orangutan) protein is RNA binding protein fox-1 homolog 1 (RBFOX1).